We begin with the raw amino-acid sequence, 267 residues long: Phosphoinositide-3-kinase-interacting protein 1 (267 aa).

The signal sequence occupies residues 1-21 (MLLAWVHTFLLSNMLLAEAYG). Over 22 to 172 (SGGCFWDNGH…NSKEKKDLGT (151 aa)) the chain is Extracellular. In terms of domain architecture, Kringle spans 24 to 101 (GCFWDNGHLY…EKRPCEDLRC (78 aa)). Cystine bridges form between C25–C101, C46–C82, and C70–C96. Over residues 91 to 101 (PEKRPCEDLRC) the composition is skewed to basic and acidic residues. The disordered stretch occupies residues 91-122 (PEKRPCEDLRCPETTSQAPPPPPPSSTTELEE). Residues 173–193 (LGYVLGVTMTVIIIAIGVGIV) traverse the membrane as a helical segment. Topologically, residues 194–267 (LGYTYKRGKD…LTDQAGTPGA (74 aa)) are cytoplasmic.

It is found in the cell membrane. Functionally, negative regulator of hepatic phosphatidylinositol 3-kinase (PI3K) activity. The sequence is that of Phosphoinositide-3-kinase-interacting protein 1 (Pik3ip1) from Rattus norvegicus (Rat).